We begin with the raw amino-acid sequence, 180 residues long: Putative adenylate kinase (180 aa).

Gly-10, Gly-12, Lys-13, Thr-14, and Thr-15 together coordinate ATP. An NMP region spans residues 30-50 (NLRDFALEKGIGEVKGDELEV). The tract at residues 99-109 (ERGYSKDKIGE) is LID. Arg-100 and Lys-138 together coordinate ATP.

It belongs to the adenylate kinase family. AK6 subfamily. Interacts with uS11. Not a structural component of 40S pre-ribosomes, but transiently interacts with them by binding to uS11.

The catalysed reaction is AMP + ATP = 2 ADP. It carries out the reaction ATP + H2O = ADP + phosphate + H(+). Functionally, broad-specificity nucleoside monophosphate (NMP) kinase that catalyzes the reversible transfer of the terminal phosphate group between nucleoside triphosphates and monophosphates. Also has ATPase activity. Involved in the late maturation steps of the 30S ribosomal particles, specifically 16S rRNA maturation. While NMP activity is not required for ribosome maturation, ATPase activity is. Associates transiently with small ribosomal subunit protein uS11. ATP hydrolysis breaks the interaction with uS11. May temporarily remove uS11 from the ribosome to enable a conformational change of the ribosomal RNA that is needed for the final maturation step of the small ribosomal subunit. The chain is Putative adenylate kinase from Pyrococcus furiosus (strain ATCC 43587 / DSM 3638 / JCM 8422 / Vc1).